Consider the following 681-residue polypeptide: UvrABC system protein B (681 aa).

Residues 30 to 419 (QGVRDGRHWQ…GEVVELLVRP (390 aa)) enclose the Helicase ATP-binding domain. Position 43–50 (43–50 (GVTGSGKT)) interacts with ATP. A Beta-hairpin motif is present at residues 96 to 119 (YYDFYQPEAYLPSLDKYIAKDLRI). A Helicase C-terminal domain is found at 435 to 601 (QIDNLLAEIR…SIVKSVDQIL (167 aa)). Residues 641-676 (YAIVEGLRLEMQEAAEHMEYEKAAYLRDEITKMEQV) form the UVR domain.

It belongs to the UvrB family. In terms of assembly, forms a heterotetramer with UvrA during the search for lesions. Interacts with UvrC in an incision complex.

The protein localises to the cytoplasm. In terms of biological role, the UvrABC repair system catalyzes the recognition and processing of DNA lesions. A damage recognition complex composed of 2 UvrA and 2 UvrB subunits scans DNA for abnormalities. Upon binding of the UvrA(2)B(2) complex to a putative damaged site, the DNA wraps around one UvrB monomer. DNA wrap is dependent on ATP binding by UvrB and probably causes local melting of the DNA helix, facilitating insertion of UvrB beta-hairpin between the DNA strands. Then UvrB probes one DNA strand for the presence of a lesion. If a lesion is found the UvrA subunits dissociate and the UvrB-DNA preincision complex is formed. This complex is subsequently bound by UvrC and the second UvrB is released. If no lesion is found, the DNA wraps around the other UvrB subunit that will check the other stand for damage. The sequence is that of UvrABC system protein B from Chlorobium chlorochromatii (strain CaD3).